The sequence spans 199 residues: N-(5'-phosphoribosyl)anthranilate isomerase (199 aa).

This sequence belongs to the TrpF family.

It catalyses the reaction N-(5-phospho-beta-D-ribosyl)anthranilate = 1-(2-carboxyphenylamino)-1-deoxy-D-ribulose 5-phosphate. Its pathway is amino-acid biosynthesis; L-tryptophan biosynthesis; L-tryptophan from chorismate: step 3/5. In Streptococcus pneumoniae serotype 4 (strain ATCC BAA-334 / TIGR4), this protein is N-(5'-phosphoribosyl)anthranilate isomerase.